The chain runs to 160 residues: Phosphopantetheine adenylyltransferase (160 aa).

Serine 9 lines the substrate pocket. ATP-binding positions include 9 to 10 (SL) and histidine 17. Substrate contacts are provided by lysine 41, leucine 74, and lysine 88. Residues 89–91 (GIR), glutamate 99, and 123–129 (YLHLSST) contribute to the ATP site.

It belongs to the bacterial CoaD family. Homohexamer. It depends on Mg(2+) as a cofactor.

It is found in the cytoplasm. The enzyme catalyses (R)-4'-phosphopantetheine + ATP + H(+) = 3'-dephospho-CoA + diphosphate. The protein operates within cofactor biosynthesis; coenzyme A biosynthesis; CoA from (R)-pantothenate: step 4/5. Functionally, reversibly transfers an adenylyl group from ATP to 4'-phosphopantetheine, yielding dephospho-CoA (dPCoA) and pyrophosphate. This Renibacterium salmoninarum (strain ATCC 33209 / DSM 20767 / JCM 11484 / NBRC 15589 / NCIMB 2235) protein is Phosphopantetheine adenylyltransferase.